We begin with the raw amino-acid sequence, 198 residues long: FMN-dependent NADH:quinone oxidoreductase (198 aa).

96–99 is a binding site for FMN; sequence MYNF.

It belongs to the azoreductase type 1 family. As to quaternary structure, homodimer. It depends on FMN as a cofactor.

It carries out the reaction 2 a quinone + NADH + H(+) = 2 a 1,4-benzosemiquinone + NAD(+). The catalysed reaction is N,N-dimethyl-1,4-phenylenediamine + anthranilate + 2 NAD(+) = 2-(4-dimethylaminophenyl)diazenylbenzoate + 2 NADH + 2 H(+). Functionally, quinone reductase that provides resistance to thiol-specific stress caused by electrophilic quinones. In terms of biological role, also exhibits azoreductase activity. Catalyzes the reductive cleavage of the azo bond in aromatic azo compounds to the corresponding amines. The protein is FMN-dependent NADH:quinone oxidoreductase of Burkholderia thailandensis (strain ATCC 700388 / DSM 13276 / CCUG 48851 / CIP 106301 / E264).